The sequence spans 269 residues: MDIMHAAVLGILQGLTEILPISSSAHLILVPWLLGWPESGLTFDVGLHVGTLIALCVYFRRDIAYLISDAITGLREGFGSQTSRLPFFIIAGTVPAAIAGKTLEKPIEEFFRGSHTLIALLLIAFGLLLALADTTGPKRWRMDRVDLRGALLIGLAQCLALIPGVSRSGITITAALFLGFTRDTAARFSFLLSLPIVAGAGILKMGELARHGIPAGELAPLLAGMATSAVSGYLGVALLLRLVQRYSLYPFVWYRLLAGGAVLAYLFAR.

8 helical membrane passes run 1–21 (MDIM…ILPI), 40–59 (GLTF…CVYF), 87–107 (FFII…EKPI), 117–137 (LIAL…TTGP), 147–166 (LRGA…PGVS), 188–208 (FSFL…MGEL), 220–240 (PLLA…ALLL), and 248–268 (LYPF…YLFA).

Belongs to the UppP family.

Its subcellular location is the cell inner membrane. It catalyses the reaction di-trans,octa-cis-undecaprenyl diphosphate + H2O = di-trans,octa-cis-undecaprenyl phosphate + phosphate + H(+). Its function is as follows. Catalyzes the dephosphorylation of undecaprenyl diphosphate (UPP). Confers resistance to bacitracin. This chain is Undecaprenyl-diphosphatase, found in Geobacter sulfurreducens (strain ATCC 51573 / DSM 12127 / PCA).